The sequence spans 49 residues: Sperm protamine P1 (49 aa).

Belongs to the protamine P1 family. Testis.

The protein localises to the nucleus. It is found in the chromosome. Functionally, protamines substitute for histones in the chromatin of sperm during the haploid phase of spermatogenesis. They compact sperm DNA into a highly condensed, stable and inactive complex. The sequence is that of Sperm protamine P1 (PRM1) from Rhinopoma hardwickii (Lesser mouse-tailed bat).